The chain runs to 510 residues: D-allose import ATP-binding protein AlsA (510 aa).

2 ABC transporter domains span residues 6 to 245 (ISMA…VGRE) and 260 to 509 (LAHE…ALPQ). 38-45 (GENGAGKS) contributes to the ATP binding site.

This sequence belongs to the ABC transporter superfamily. D-allose importer (TC 3.A.1.2.6) family. As to quaternary structure, the complex is composed of two ATP-binding proteins (AlsA), two transmembrane proteins (AlsC) and a solute-binding protein (AlsB).

It localises to the cell inner membrane. The enzyme catalyses D-allose(out) + ATP + H2O = D-allose(in) + ADP + phosphate + H(+). Functionally, part of the ABC transporter complex AlsBAC involved in D-allose import. Probably responsible for energy coupling to the transport system. The chain is D-allose import ATP-binding protein AlsA (alsA) from Escherichia coli (strain K12).